We begin with the raw amino-acid sequence, 525 residues long: Putative EGF-like domain-containing protein R659 (525 aa).

The first 24 residues, 1–24 (MGNKWCGIFLTILLLAQMSQTIFG), serve as a signal peptide directing secretion. N60, N77, N171, N181, N268, and N281 each carry an N-linked (GlcNAc...) asparagine; by host glycan. The EGF-like domain maps to 317-359 (LTQGCGNCDSNAECVFVSGSNSIVPKYQCKCKSGYVGNGTHCS). 3 disulfides stabilise this stretch: C321–C330, C324–C345, and C347–C358. N-linked (GlcNAc...) asparagine; by host glycosylation is found at N354 and N411.

It localises to the secreted. The protein is Putative EGF-like domain-containing protein R659 of Acanthamoeba polyphaga (Amoeba).